The sequence spans 415 residues: Glutamyl-tRNA reductase (415 aa).

Substrate-binding positions include 49–52, S104, 109–111, and Q115; these read TCNR and EPQ. C50 acts as the Nucleophile in catalysis. 184–189 contacts NADP(+); it reads GAGEMI.

Belongs to the glutamyl-tRNA reductase family. As to quaternary structure, homodimer.

The enzyme catalyses (S)-4-amino-5-oxopentanoate + tRNA(Glu) + NADP(+) = L-glutamyl-tRNA(Glu) + NADPH + H(+). It functions in the pathway porphyrin-containing compound metabolism; protoporphyrin-IX biosynthesis; 5-aminolevulinate from L-glutamyl-tRNA(Glu): step 1/2. Catalyzes the NADPH-dependent reduction of glutamyl-tRNA(Glu) to glutamate 1-semialdehyde (GSA). This is Glutamyl-tRNA reductase from Neisseria gonorrhoeae (strain ATCC 700825 / FA 1090).